The primary structure comprises 187 residues: 5-hmdU DNA kinase (187 aa).

This sequence belongs to the thymidylate kinase family. 5-hmdU DNA kinase subfamily.

It catalyses the reaction 5-hydroxymethyl-dUMP in DNA + ATP = 5-phosphomethyl-dUMP in DNA + ADP + H(+). Functionally, phosphorylates 5-hydroxymethyluracil (5hmdU) into 5-phosphomethyl-2'-deoxyuridine (5-PmdU) on DNA as a step in the pathway leading to thymidine hypermodifications in the viral genome. The phosphate is added internally to the DNA polymer. Also transfers glutamate to 5-pyrophosphoryloxymethyldeoxyuridine (5-PPmdU) to produce 5-Nalpha-glyutamylthymidine (Nalpha-GluT). As a final result of the pathway of hypermodification, 5-aminoethyl-2'-deoxyuridine (5-NedU) substitutes for about 30% of thymidines in the viral DNA. These modifications probably prevent degradation of viral genome by the host restriction-modification antiviral defense system. The chain is 5-hmdU DNA kinase from Pseudomonas phage M6.